The following is a 135-amino-acid chain: Large ribosomal subunit protein mL41B (135 aa).

The transit peptide at 1-13 (MGLITKIARGLVR) directs the protein to the mitochondrion.

It belongs to the mitochondrion-specific ribosomal protein mL41 family. As to quaternary structure, component of the mitochondrial ribosome large subunit (39S) which comprises a 16S rRNA and about 50 distinct proteins.

It localises to the mitochondrion. In terms of biological role, component of the mitochondrial ribosome large subunit. Also involved in apoptosis and cell cycle. In Xenopus laevis (African clawed frog), this protein is Large ribosomal subunit protein mL41B (mrpl41-b).